The following is a 256-amino-acid chain: Alcohol dehydrogenase (256 aa).

12–35 (FVAGLGGIGLDTSKELLKRDLKNL) contacts NAD(+). Residue Ser-140 participates in substrate binding. The active-site Proton acceptor is Tyr-153.

It belongs to the short-chain dehydrogenases/reductases (SDR) family. Homodimer.

The enzyme catalyses a primary alcohol + NAD(+) = an aldehyde + NADH + H(+). The catalysed reaction is a secondary alcohol + NAD(+) = a ketone + NADH + H(+). In Drosophila sechellia (Fruit fly), this protein is Alcohol dehydrogenase (Adh).